The sequence spans 334 residues: Putative transport protein MJ1177 (334 aa).

Helical transmembrane passes span 13–33, 61–81, 138–158, 191–211, 234–254, 259–279, and 293–313; these read VIVGLLIMLLYIIWPFIDVLA, LAISIYILPIMTITIYALLTF, IIDVGYLIVKVIMVLFLTFYF, SYKNLFISCVSLSIIITILSY, LLPILGGWMVYISIAIYFFLI, KAVFMFIYGELFLSIAPDFVI, and VLVVIAFLMAPLSLGLSGFAI.

Belongs to the autoinducer-2 exporter (AI-2E) (TC 2.A.86) family.

The protein localises to the cell membrane. This is Putative transport protein MJ1177 from Methanocaldococcus jannaschii (strain ATCC 43067 / DSM 2661 / JAL-1 / JCM 10045 / NBRC 100440) (Methanococcus jannaschii).